A 113-amino-acid polypeptide reads, in one-letter code: ATP-dependent Clp protease adapter protein ClpS (113 aa).

The disordered stretch occupies residues 1-26 (MLMQPLMMSDNPDDESDLGLLTKTRP).

The protein belongs to the ClpS family. In terms of assembly, binds to the N-terminal domain of the chaperone ClpA.

Its function is as follows. Involved in the modulation of the specificity of the ClpAP-mediated ATP-dependent protein degradation. The chain is ATP-dependent Clp protease adapter protein ClpS from Ruegeria sp. (strain TM1040) (Silicibacter sp.).